The sequence spans 94 residues: Large ribosomal subunit protein eL36 (94 aa).

Residues 1-25 show a composition bias toward basic residues; that stretch reads MKNAYKKVRVRYPVKRPDVKRKQRG. The tract at residues 1–30 is disordered; it reads MKNAYKKVRVRYPVKRPDVKRKQRGPRAET.

It belongs to the eukaryotic ribosomal protein eL36 family. As to quaternary structure, component of the large ribosomal subunit.

It localises to the cytoplasm. This chain is Large ribosomal subunit protein eL36 (RPL36), found in Encephalitozoon cuniculi (strain GB-M1) (Microsporidian parasite).